A 202-amino-acid polypeptide reads, in one-letter code: Transmembrane 4 L6 family member 1 (202 aa).

Topologically, residues 1–9 (MCSSKCTRY) are cytoplasmic. A helical transmembrane segment spans residues 10-30 (IGHSLVVFAVLCIVANILLYF). At 31–49 (PNGETKYAYEDHLSRFVWF) the chain is on the extracellular side. Residues 50–70 (FAGIVGGGLLILLPAFVFLGL) traverse the membrane as a helical segment. The Cytoplasmic portion of the chain corresponds to 71–93 (EGEDCCGCWSCENYGKRCTMLSS). The helical transmembrane segment at 94-114 (IMAALIGIAGSGYCVIVAALG) threads the bilayer. The Extracellular portion of the chain corresponds to 115–161 (LAEGPKCGDSHGMWNYTFANTDGQYLLDPTTWSKCHEPNNIVEWNVT). N129 and N159 each carry an N-linked (GlcNAc...) asparagine glycan. The helical transmembrane segment at 162–182 (LFSILLALGGLEFILCLIQVI) threads the bilayer. The Cytoplasmic portion of the chain corresponds to 183-202 (NGVLEGMCSYCCSHQQQYDC).

This sequence belongs to the L6 tetraspanin family. As to quaternary structure, present in high molecular weight complexes in tumor cells. Interacts with SDCBP2.

Its subcellular location is the membrane. The sequence is that of Transmembrane 4 L6 family member 1 (TM4SF1) from Mesocricetus auratus (Golden hamster).